A 46-amino-acid chain; its full sequence is U1-plectoxin-Pt1f (46 aa).

5 disulfides stabilise this stretch: C4/C18, C11/C24, C17/C35, C21/C44, and C26/C33.

It belongs to the neurotoxin 02 (plectoxin) family. 02 (plectoxin) subfamily. Expressed by the venom gland.

Its subcellular location is the secreted. Its function is as follows. Potent toxin that may paralyze and/or kill insect pests such as H.virescens (lepidoptera), S.exigua (beet armyworm) and M.sexta (tobacco hornworm). In Plectreurys tristis (Spider), this protein is U1-plectoxin-Pt1f.